Reading from the N-terminus, the 498-residue chain is Glycerol kinase (498 aa).

T12 contributes to the ADP binding site. 3 residues coordinate ATP: T12, T13, and S14. Residue T12 participates in sn-glycerol 3-phosphate binding. R16 serves as a coordination point for ADP. Positions 82, 83, 135, and 245 each coordinate sn-glycerol 3-phosphate. Glycerol-binding residues include R82, E83, Y135, D245, and Q246. The ADP site is built by T267 and G310. ATP-binding residues include T267, G310, Q314, and G411. Positions 411 and 415 each coordinate ADP.

This sequence belongs to the FGGY kinase family. As to quaternary structure, homotetramer and homodimer (in equilibrium).

The enzyme catalyses glycerol + ATP = sn-glycerol 3-phosphate + ADP + H(+). Its pathway is polyol metabolism; glycerol degradation via glycerol kinase pathway; sn-glycerol 3-phosphate from glycerol: step 1/1. Activated by phosphorylation and inhibited by fructose 1,6-bisphosphate (FBP). Its function is as follows. Key enzyme in the regulation of glycerol uptake and metabolism. Catalyzes the phosphorylation of glycerol to yield sn-glycerol 3-phosphate. This Clostridium botulinum (strain Eklund 17B / Type B) protein is Glycerol kinase.